A 388-amino-acid chain; its full sequence is Tryptophan synthase beta chain (388 aa).

Position 86 is an N6-(pyridoxal phosphate)lysine (lysine 86).

The protein belongs to the TrpB family. Tetramer of two alpha and two beta chains. It depends on pyridoxal 5'-phosphate as a cofactor.

The catalysed reaction is (1S,2R)-1-C-(indol-3-yl)glycerol 3-phosphate + L-serine = D-glyceraldehyde 3-phosphate + L-tryptophan + H2O. It functions in the pathway amino-acid biosynthesis; L-tryptophan biosynthesis; L-tryptophan from chorismate: step 5/5. In terms of biological role, the beta subunit is responsible for the synthesis of L-tryptophan from indole and L-serine. The polypeptide is Tryptophan synthase beta chain (trpB) (Buchnera aphidicola subsp. Acyrthosiphon pisum (strain APS) (Acyrthosiphon pisum symbiotic bacterium)).